We begin with the raw amino-acid sequence, 415 residues long: T-cell-specific guanine nucleotide triphosphate-binding protein 1 (415 aa).

Residues 55–237 enclose the IRG-type G domain; the sequence is APLHIAVTGE…PKLETKLLQD (183 aa). GDP-binding residues include Gly66, Gly68, Lys69, and Ser70. Thr89 is subject to (Microbial infection) Phosphothreonine; by ROP17. GDP is bound by residues Gly90, Lys171, Asp173, and Asn219.

The protein belongs to the TRAFAC class dynamin-like GTPase superfamily. IRG family. In terms of assembly, monomer, homodimer or homotetramer in the presence of GTP. Forms higher order homooligomers in GTP-dependent manner. As to quaternary structure, (Microbial infection) Interacts with Toxoplasma gondii ROP18. Post-translationally, (Microbial infection) Phosphorylated by Toxoplasma gondii ROP17; the phosphorylation leads to disassembly of IRGB6 (TGTP1/TGTP2) polymers into monomers and dimers. Phosphorylated by Toxoplasma gondii ROP18. In terms of tissue distribution, expressed in thymus and lymph nodes, predominantly T-cells. Not expressed by immature CD4(+) CD8(+) thymocytes (at protein level). Expressed in IFNG-stimulated macrophages. Expressed at low levels in unstimulated astrocytes. Due to sequence similarity with Tgtp2, it is impossible to assign unambiguously experimental data published in the literature to Tgtp1 or Tgtp2 gene.

The protein localises to the cytoplasm. It is found in the endoplasmic reticulum. The protein resides in the golgi apparatus. Its subcellular location is the parasitophorous vacuole membrane. The enzyme catalyses GTP + H2O = GDP + phosphate + H(+). Involved in innate cell-autonomous resistance to intracellular pathogens, such as Toxoplasma gondii. During avirulent type II T.gondii infection, recruited to the parasitophorous vacuole (PV) membrane, leading to PV vesiculation and rupture, and subsequent digestion of the parasite within the cytosol. Not recruited to virulent type I T.gondii PV membrane. May confer an antiviral state for vesicular stomatitis virus. The sequence is that of T-cell-specific guanine nucleotide triphosphate-binding protein 1 (Tgtp1) from Mus musculus (Mouse).